The following is a 256-amino-acid chain: uncharacterized protein (256 aa).

An N-terminal signal peptide occupies residues 1–24 (MIKRVNKLVLGISLLFLVISIAAG). Cysteine 25 carries N-palmitoyl cysteine lipidation. Cysteine 25 is lipidated: S-diacylglycerol cysteine.

Belongs to the staphylococcal tandem lipoprotein family.

Its subcellular location is the cell membrane. This is an uncharacterized protein from Staphylococcus aureus.